A 203-amino-acid polypeptide reads, in one-letter code: ADP-ribosylation factor-like protein 6-interacting protein 1 (203 aa).

Residues 1-41 are Cytoplasmic-facing; the sequence is MAEGDNRSSNLLAAETASLEEQLQGWGEVMLMADKVLRWER. The helical transmembrane segment at 42 to 62 threads the bilayer; it reads AWFPPAIMGVVSLVFLIIYYL. The Lumenal segment spans residues 63–65; it reads DPS. A helical membrane pass occupies residues 66–86; that stretch reads VLSGVSCFVMFLCLADYLVPI. Residues 87 to 133 are Cytoplasmic-facing; the sequence is LAPRIFGSNKWTTEQQQRFHEICSNLVKTRRRAVGWWKRLFTLKEEK. A helical membrane pass occupies residues 134–175; sequence PKMYFMTMIVSLAAVAWVGQQVHNLLLTYLIVTSLLLLPGLN. Over 176–203 the chain is Lumenal; that stretch reads QHGIISKYIGMAKREINKLLKQKEKKNE.

Belongs to the ARL6ip family. In terms of assembly, homooligomer. Heterodimer with ARL6IP5. Interacts with ATL1, TMEM33 and ARL6.

Its subcellular location is the endomembrane system. It is found in the endoplasmic reticulum membrane. It localises to the endoplasmic reticulum. In terms of biological role, positively regulates SLC1A1/EAAC1-mediated glutamate transport by increasing its affinity for glutamate in a PKC activity-dependent manner. Promotes the catalytic efficiency of SLC1A1/EAAC1 probably by reducing its interaction with ARL6IP5, a negative regulator of SLC1A1/EAAC1-mediated glutamate transport. Plays a role in the formation and stabilization of endoplasmic reticulum tubules. Negatively regulates apoptosis, possibly by modulating the activity of caspase-9 (CASP9). Inhibits cleavage of CASP9-dependent substrates and downstream markers of apoptosis but not CASP9 itself. May be involved in protein transport, membrane trafficking, or cell signaling during hematopoietic maturation. The polypeptide is ADP-ribosylation factor-like protein 6-interacting protein 1 (ARL6IP1) (Pongo abelii (Sumatran orangutan)).